The chain runs to 422 residues: MTVQDYMLTLGKQARAASRQMASADTGKKNAALLAIADAINSARDTIAAENARDMEAGRANGLDAALLDRLELTPERIDGMIEGLNQVAALPDPCGEITDLKYRPSGIQLGKKRTPLGVVGIIYESRPNVTVDAASLCLKSGNAAILRGGSEAIHSNKAVAVCIAAGLKAAGLPETAVQVVETTDRAAVGELITMTKYVDVVVPRGGKSLIERISADARVSVIKHLDGICHVYVDKTANLDKAFNIVINSKTHRYGVCNAMETMLVDEAIAADFLPRAAKEFAARGVELRGCEKTVALLTASDIPVVAALEEDWDTEYLAPILSIKLVANMDEAIEHINNHGSHHTDALVSENYTLARKFLTEVDSSSVMINASTRFADGFEYGLGAEIGISTDKIHARGPVGLEGLTSQKWIVFGDGHIRN.

This sequence belongs to the gamma-glutamyl phosphate reductase family.

The protein localises to the cytoplasm. The catalysed reaction is L-glutamate 5-semialdehyde + phosphate + NADP(+) = L-glutamyl 5-phosphate + NADPH + H(+). The protein operates within amino-acid biosynthesis; L-proline biosynthesis; L-glutamate 5-semialdehyde from L-glutamate: step 2/2. Functionally, catalyzes the NADPH-dependent reduction of L-glutamate 5-phosphate into L-glutamate 5-semialdehyde and phosphate. The product spontaneously undergoes cyclization to form 1-pyrroline-5-carboxylate. This chain is Gamma-glutamyl phosphate reductase, found in Saccharophagus degradans (strain 2-40 / ATCC 43961 / DSM 17024).